The chain runs to 309 residues: Agglutinin (309 aa).

Residue Met-1 is modified to N-acetylmethionine. 2 consecutive Jacalin-type lectin domains span residues Phe-4 to Ile-148 and Pro-163 to Tyr-308.

Belongs to the jacalin lectin family.

Functionally, D-mannose/D-glucose-binding lectin. Binds N-linked high-mannose-type glycans. Has a preference for smaller (Man(2)-Man(6)) high-mannose-type glycans to larger (Man(7)-Man(9)) ones. Recognizes both alpha1-6 extended and alpha1-3 extended monoantennary glycans. The addition of alpha1-2Man to the Man-alpha1-3Man-beta branch results in a significant loss of affinity, but beta1-2GlcNAc has some affinity. Has less affinity for biantennary glycans, and affinity is very weak for the biantennary complex-type N-glycans with bisecting GlcNAc. No affinity is observed for tri- and tetra-antennary glycans. Has mitogenic and hemagglutinating activities. This is Agglutinin from Castanea crenata (Japanese chestnut).